Reading from the N-terminus, the 326-residue chain is Transcription initiation factor IIB (326 aa).

The TFIIB-type zinc-finger motif lies at 26 to 57 (DVEVCPECGSPRLIRDYRRGEFICQDCGLVIE). Residues Cys-30, Cys-33, Cys-49, and Cys-52 each coordinate Zn(2+). 2 tandem repeats follow at residues 143-226 (SELD…TREL) and 237-318 (DYIP…ELAE).

It belongs to the TFIIB family.

Stabilizes TBP binding to an archaeal box-A promoter. Also responsible for recruiting RNA polymerase II to the pre-initiation complex (DNA-TBP-TFIIB). This Archaeoglobus fulgidus (strain ATCC 49558 / DSM 4304 / JCM 9628 / NBRC 100126 / VC-16) protein is Transcription initiation factor IIB.